The following is a 465-amino-acid chain: Mitochondrial-processing peptidase subunit beta (465 aa).

Histidine 79 is a Zn(2+) binding site. Glutamate 82 (proton acceptor) is an active-site residue. Zn(2+) contacts are provided by histidine 83 and glutamate 159.

It belongs to the peptidase M16 family. Heterodimer of an alpha subunit and a beta subunit subunits, forming the mitochondrial processing protease (MPP) in which the alpha subunit is involved in substrate recognition and binding and the beta subunit is the catalytic subunit. The cofactor is Zn(2+).

It is found in the mitochondrion matrix. It catalyses the reaction Release of N-terminal transit peptides from precursor proteins imported into the mitochondrion, typically with Arg in position P2.. Its activity is regulated as follows. Binding to the alpha subunit is required for catalytic activity. In terms of biological role, catalytic subunit of the essential mitochondrial processing protease (MPP), which cleaves the mitochondrial sequence off newly imported precursors proteins. Preferentially, cleaves after an arginine at position P2. The protein is Mitochondrial-processing peptidase subunit beta (MPP1) of Blastocladiella emersonii (Aquatic fungus).